The sequence spans 281 residues: UPF0500 protein C1orf216 homolog (281 aa).

Residues 1–12 (MFTIQKPDTVSH) are compositionally biased toward polar residues. The segment at 1–197 (MFTIQKPDTV…SSSDSDSISV (197 aa)) is disordered. Basic and acidic residues predominate over residues 45-74 (TYDKNENWSQDKKGGEEGENKSKSEDEHSS). Composition is skewed to low complexity over residues 92–102 (STGSEGISLSS), 147–161 (SSSLSIDSPDSVSAS), and 169–178 (PAPTTTPQEN). The segment covering 179 to 190 (PETEDSDVESSS) has biased composition (acidic residues). The stretch at 198–257 (TLSEAFQSLQDKEKLKEREKEKHHAQLTMYRRLALLRWIRALQQKVRDQQNRLQESFDTI) forms a coiled coil.

It belongs to the UPF0500 family.

This chain is UPF0500 protein C1orf216 homolog, found in Xenopus laevis (African clawed frog).